The primary structure comprises 72 residues: Mitotic-spindle organizing protein 1 (72 aa).

This sequence belongs to the MOZART1 family. As to quaternary structure, part of the gamma-tubulin complex.

It is found in the cytoplasm. The protein resides in the cytoskeleton. It localises to the microtubule organizing center. Its subcellular location is the centrosome. The protein localises to the spindle. Functionally, required for gamma-tubulin complex recruitment to the centrosome. The polypeptide is Mitotic-spindle organizing protein 1 (mzt1) (Xenopus tropicalis (Western clawed frog)).